Here is a 70-residue protein sequence, read N- to C-terminus: Large ribosomal subunit protein eL38 (70 aa).

The protein belongs to the eukaryotic ribosomal protein eL38 family.

In Artemia franciscana (Brine shrimp), this protein is Large ribosomal subunit protein eL38 (RPL38).